A 248-amino-acid polypeptide reads, in one-letter code: Probable transcriptional regulatory protein Mrad2831_3553 (248 aa).

It belongs to the TACO1 family.

It localises to the cytoplasm. This chain is Probable transcriptional regulatory protein Mrad2831_3553, found in Methylobacterium radiotolerans (strain ATCC 27329 / DSM 1819 / JCM 2831 / NBRC 15690 / NCIMB 10815 / 0-1).